A 1004-amino-acid polypeptide reads, in one-letter code: Protein phosphatase 1 regulatory subunit 12A (1004 aa).

An important for interaction with PPP1CB region spans residues 35–38 (KVKF). 6 ANK repeats span residues 39 to 68 (DDGA…DINY), 72 to 101 (DGLT…NINQ), 105 to 134 (EGWI…HVGA), 138 to 164 (EGDT…RQGV), 198 to 227 (SGGT…DVNI), and 231 to 260 (DGWT…DMEA). Residues 291–300 (HSEKREKKSP) show a composition bias toward basic and acidic residues. A disordered region spans residues 291 to 920 (HSEKREKKSP…SYLEDRKPYC (630 aa)). Over residues 302 to 316 (IESTANLDNNQTQKT) the composition is skewed to polar residues. 2 stretches are compositionally biased toward basic and acidic residues: residues 318–329 (KNKETLIMEQEK) and 336–353 (SLEH…KDES). Acidic residues predominate over residues 357-369 (SEEEEDDDSESEA). A compositionally biased stretch (polar residues) spans 378-392 (ANANTTSTQSASMTA). Residues 417–427 (SPKEEERKDES) show a composition bias toward basic and acidic residues. A compositionally biased stretch (low complexity) spans 464 to 475 (RSASSPRLSSSL). Over residues 476-486 (DNKEKEKDGKG) the composition is skewed to basic and acidic residues. Positions 514–525 (SSASSIRSGSSY) are enriched in low complexity. Residues 528-538 (RKWEEDVKKNS) are compositionally biased toward basic and acidic residues. Polar residues predominate over residues 539 to 554 (LNEGPTSLNTSYQRSG). Composition is skewed to low complexity over residues 564 to 578 (VSSN…VTSS) and 587 to 602 (ASAN…STSA). Residues 613–624 (WAEDSTEKEKDS) are compositionally biased toward basic and acidic residues. Residues 625 to 659 (VPTAVTVPVAPSVVNAAATTTAMTTATSGTVSSTS) show a composition bias toward low complexity. The span at 672–681 (VRDEESESQR) shows a compositional bias: basic and acidic residues. Positions 682 to 692 (KARSRQARQSR) are enriched in basic residues. Residue Thr-695 is modified to Phosphothreonine; by ROCK2. The segment covering 717–765 (RTREQENEEKEKEEKEKQDKEKQEEKKESETKDDDYRQRYSRTVEEPYH) has biased composition (basic and acidic residues). The span at 770–793 (TSTSTSTSSTSSLSTSTSSLSSSS) shows a compositional bias: low complexity. Residues 794–808 (QLNRPNSLIGITSAY) are compositionally biased toward polar residues. Residues 812–837 (GTKESEREGGKKEEEKEEDKSQPKSI) show a composition bias toward basic and acidic residues. Basic residues predominate over residues 838–849 (RERRRPREKRRS). A Phosphothreonine; by ROCK2 modification is found at Thr-850. The segment covering 864 to 880 (QEHQSDSEEGTNKKETQ) has biased composition (basic and acidic residues). Residues 881-896 (SDSLSRYDTGSLSVSS) are compositionally biased toward polar residues.

As to quaternary structure, PP1 comprises a catalytic subunit, PPP1CA, PPP1CB or PPP1CC, and one or several targeting or regulatory subunits. PPP1R12A mediates binding to myosin. In terms of processing, phosphorylated by CIT (Rho-associated kinase) and by ROCK2 on serine and threonine residues. Phosphorylation at Thr-695 leads to inhibition of myosin phosphatase activity. Phosphorylation at Thr-850 abolishes myosin binding. May be phosphorylated at Thr-695 by DMPK; may inhibit the myosin phosphatase activity. In terms of tissue distribution, detected in brain, lung, aorta, heart, gizzard, stomach, oviduct, spleen, kidney and small intestine.

It is found in the cytoplasm. Its subcellular location is the cytoskeleton. The protein resides in the stress fiber. Its function is as follows. Regulates myosin phosphatase activity. The sequence is that of Protein phosphatase 1 regulatory subunit 12A (PPP1R12A) from Gallus gallus (Chicken).